A 1318-amino-acid polypeptide reads, in one-letter code: MLDVNFFDELRIGLASAEDIRNWSYGEVKKPETINYRTLKPEKDGLFCEKIFGPTRDWECYCGKYKRVRFKGIICERCGVEVTRAKVRRERMGHIELAAPVTHIWYFKGVPSRLGYLLDLAPKDLEKIIYFAAYVIVGVDEELRHNELSTLEAEMQVEKKSVADQRDADLEARAQKLEADIAELEAEGAKSDVRRKVKDGGEREMRQLRDRAQRELDRLDEIWTTFTKLSVKQLIVDELLYRELVDRYGEYFTGAMGAESIQKLMENFDIDAEAENLRETIRSGKGQKKLRALKRLKVVAAFQTNQNSPMGMVLNAVPVIPPELRPMVQLDGGRFATSDLNDLYRRVINRNNRLKRLIDLGAPEIIVNNEKRMLQESVDALFDNGRRGRPVTGPGNRPLKSLSDLLKGKQGRFRQNLLGKRVDYSGRSVIVVGPQLKLHQCGLPKLMALELFKPFVMKRLVDLNHAQNIKSAKRMVERQRAQVWDVLEEVIAEHPVLLNRAPTLHRLGIQAFEPQLVEGKAIQLHPLVCEAFNADFDGDQMAVHLPLSAEAQAEARILMLSSNNILSPASGRPLAMPRLDMVTGLYHLTRLDEGAIGELAASTSDEAEQGVYSSPAEAQMAVDRGALVVQAKIKVRLTQQRPPRDIESELFPEGWNYGDGWTAETTLGRVLFNELLPADYPFVNEQMPKKRQATIINDLAERYPMIVVAQTVDKLKDAGFYWATRSGVTVSISDVLVPPEKAQIMESFEAQADQIEKKYQRGALNKTERNSALVKIWSEATDEVGKAMEAHFPDDNPIPMIVKSGAAGNMTQVRSLAGMKGLVTNPKGEFIPRPIKSSFKEGLTVLEYFINTHGARKGLADTALRTADSGYLTRRLVDVSQDVIVREVDCGTERGIVTTIAEKQADGTLIRDAHVETSTYARTLAADAVDENGNVIVERGHDLGDPAIDALLEAGITQVKVRSVLTCTTGTGVCATCYGRSMATGKLVDIGEAVGIVAAQSIGEPGTQLTMRTFHQGGVAGDDITGGLPRVQELFEARVPKGKAPIADVSGRVQLEDGDRFYKITIVPDDGGEEVVYDKLSKRQRLRVFKHDDGTERLLADGDHVEVGQQLMEGAADPHEVLRVMGPRQVQIHLVNEVQEVYRSQGVSIHDKHIEVIVRQMLRRVTIIDSGATEFLPGSLTERADFEAANRRVVAEGGEPAAGRPVLMGITKASLATDSWLSAASFQETTRVLTDAAINCRSDKLIGLKENVIIGKLIPAGTGINRYRNIQVQPTEEARAAAYAVPSYDDQYYSPDGFGQNTGAAVPLDDYGFSNDYR.

Zn(2+)-binding residues include Cys60, Cys62, Cys75, and Cys78. 3 residues coordinate Mg(2+): Asp535, Asp537, and Asp539. Zn(2+) contacts are provided by Cys890, Cys967, Cys974, and Cys977.

This sequence belongs to the RNA polymerase beta' chain family. In terms of assembly, the RNAP catalytic core consists of 2 alpha, 1 beta, 1 beta' and 1 omega subunit. When a sigma factor is associated with the core the holoenzyme is formed, which can initiate transcription. Mg(2+) serves as cofactor. It depends on Zn(2+) as a cofactor.

It catalyses the reaction RNA(n) + a ribonucleoside 5'-triphosphate = RNA(n+1) + diphosphate. Functionally, DNA-dependent RNA polymerase catalyzes the transcription of DNA into RNA using the four ribonucleoside triphosphates as substrates. This is DNA-directed RNA polymerase subunit beta' from Rhodococcus jostii (strain RHA1).